A 358-amino-acid polypeptide reads, in one-letter code: Peptide chain release factor 1 (358 aa).

The residue at position 233 (Gln233) is an N5-methylglutamine.

The protein belongs to the prokaryotic/mitochondrial release factor family. Methylated by PrmC. Methylation increases the termination efficiency of RF1.

The protein localises to the cytoplasm. Functionally, peptide chain release factor 1 directs the termination of translation in response to the peptide chain termination codons UAG and UAA. The chain is Peptide chain release factor 1 from Macrococcus caseolyticus (strain JCSC5402) (Macrococcoides caseolyticum).